The sequence spans 86 residues: U15-lycotoxin-Ls1g (86 aa).

The signal sequence occupies residues methionine 1 to serine 20. Positions aspartate 21–alanine 66 constitute a WAP domain. Disulfide bonds link cysteine 24/cysteine 54, cysteine 32/cysteine 58, cysteine 41/cysteine 53, cysteine 42/cysteine 80, and cysteine 47/cysteine 62.

It belongs to the venom protein 11 family. 01 (wap-1) subfamily. Post-translationally, contains 5 disulfide bonds. In terms of tissue distribution, expressed by the venom gland.

The protein localises to the secreted. In terms of biological role, has antibacterial activity. This is U15-lycotoxin-Ls1g from Lycosa singoriensis (Wolf spider).